Here is a 382-residue protein sequence, read N- to C-terminus: p21-activated protein kinase-interacting protein 1 (382 aa).

WD repeat units lie at residues 37-77, 80-120, 122-160, 202-240, and 243-284; these read THHS…EHGA, HHAG…KTFK, HRGHVTFLSIHPSGKLALSVGTDKTLRTWNLIEGRSAFI, TNGKRISSVTFLSDSVLAVAGDEEVVRIFDCDSLECLCE, and AHEN…KVPP. Residues 313 to 382 are disordered; the sequence is LPPAAEPCPD…MSEKKRKKKM (70 aa). Residues 352–363 are compositionally biased toward polar residues; it reads DSKQPTKGNSPV. Residues 365 to 382 are compositionally biased toward basic residues; it reads AKKRKMATMSEKKRKKKM.

In terms of assembly, interacts with PAK1.

It localises to the nucleus. It is found in the nucleolus. Negatively regulates the PAK1 kinase. PAK1 is a member of the PAK kinase family, which has been shown to play a positive role in the regulation of signaling pathways involving MAPK8 and RELA. PAK1 exists as an inactive homodimer, which is activated by binding of small GTPases such as CDC42 to an N-terminal regulatory domain. PAK1IP1 also binds to the N-terminus of PAK1, and inhibits the specific activation of PAK1 by CDC42. May be involved in ribosomal large subunit assembly. The sequence is that of p21-activated protein kinase-interacting protein 1 (Pak1ip1) from Mus musculus (Mouse).